We begin with the raw amino-acid sequence, 38 residues long: Photosystem II reaction center protein L (38 aa).

Residues 17–37 (SLYWGLLLIXVLAVLFSNYFF) traverse the membrane as a helical segment.

It belongs to the PsbL family. PSII is composed of 1 copy each of membrane proteins PsbA, PsbB, PsbC, PsbD, PsbE, PsbF, PsbH, PsbI, PsbJ, PsbK, PsbL, PsbM, PsbT, PsbX, PsbY, PsbZ, Psb30/Ycf12, at least 3 peripheral proteins of the oxygen-evolving complex and a large number of cofactors. It forms dimeric complexes.

The protein localises to the plastid. It is found in the chloroplast thylakoid membrane. In terms of biological role, one of the components of the core complex of photosystem II (PSII). PSII is a light-driven water:plastoquinone oxidoreductase that uses light energy to abstract electrons from H(2)O, generating O(2) and a proton gradient subsequently used for ATP formation. It consists of a core antenna complex that captures photons, and an electron transfer chain that converts photonic excitation into a charge separation. This subunit is found at the monomer-monomer interface and is required for correct PSII assembly and/or dimerization. This is Photosystem II reaction center protein L from Allium textile (Textile onion).